The sequence spans 160 residues: ATP synthase subunit b (160 aa).

A helical transmembrane segment spans residues 13–33 (VNLAIVIGVLVWFLRGFLGGI).

This sequence belongs to the ATPase B chain family. In terms of assembly, F-type ATPases have 2 components, F(1) - the catalytic core - and F(0) - the membrane proton channel. F(1) has five subunits: alpha(3), beta(3), gamma(1), delta(1), epsilon(1). F(0) has four main subunits: a(1), b(1), b'(1) and c(10-14). The alpha and beta chains form an alternating ring which encloses part of the gamma chain. F(1) is attached to F(0) by a central stalk formed by the gamma and epsilon chains, while a peripheral stalk is formed by the delta, b and b' chains.

The protein resides in the cellular thylakoid membrane. In terms of biological role, f(1)F(0) ATP synthase produces ATP from ADP in the presence of a proton or sodium gradient. F-type ATPases consist of two structural domains, F(1) containing the extramembraneous catalytic core and F(0) containing the membrane proton channel, linked together by a central stalk and a peripheral stalk. During catalysis, ATP synthesis in the catalytic domain of F(1) is coupled via a rotary mechanism of the central stalk subunits to proton translocation. Component of the F(0) channel, it forms part of the peripheral stalk, linking F(1) to F(0). In Parasynechococcus marenigrum (strain WH8102), this protein is ATP synthase subunit b.